The sequence spans 515 residues: Probable cytochrome P450 6d4 (515 aa).

Residue C457 coordinates heme.

Belongs to the cytochrome P450 family. It depends on heme as a cofactor.

It localises to the endoplasmic reticulum membrane. Its subcellular location is the microsome membrane. In terms of biological role, may be involved in the metabolism of insect hormones and in the breakdown of synthetic insecticides. The sequence is that of Probable cytochrome P450 6d4 (Cyp6d4) from Drosophila melanogaster (Fruit fly).